The sequence spans 316 residues: Homoserine kinase (316 aa).

The protein belongs to the pseudomonas-type ThrB family.

It catalyses the reaction L-homoserine + ATP = O-phospho-L-homoserine + ADP + H(+). Its pathway is amino-acid biosynthesis; L-threonine biosynthesis; L-threonine from L-aspartate: step 4/5. The sequence is that of Homoserine kinase from Pseudomonas aeruginosa (strain LESB58).